Reading from the N-terminus, the 249-residue chain is 5'-nucleotidase SurE (249 aa).

Residues Asp-9, Asp-10, Ser-40, and Asn-92 each coordinate a divalent metal cation.

It belongs to the SurE nucleotidase family. The cofactor is a divalent metal cation.

The protein resides in the cytoplasm. The catalysed reaction is a ribonucleoside 5'-phosphate + H2O = a ribonucleoside + phosphate. Functionally, nucleotidase that shows phosphatase activity on nucleoside 5'-monophosphates. This Shewanella baltica (strain OS195) protein is 5'-nucleotidase SurE.